The sequence spans 109 residues: Putative transporter-like protein YIL171W (109 aa).

The span at 1-22 (MSGVNNTSANDLSTTESNSNSA) shows a compositional bias: polar residues. The disordered stretch occupies residues 1–40 (MSGVNNTSANDLSTTESNSNSAVGAPSVKTEHGDSKDSLN). Residues 1 to 56 (MSGVNNTSANDLSTTESNSNSAVGAPSVKTEHGDSKDSLNLDATEAPIDLPQKPLS) are Cytoplasmic-facing. The span at 29 to 39 (KTEHGDSKDSL) shows a compositional bias: basic and acidic residues. The helical transmembrane segment at 57–77 (AYTTVAILCLMIAFGGFIFGW) threads the bilayer. At 78-109 (DTGTISGFVNLSDFIRRFGQKKTTRGLTTYRK) the chain is on the extracellular side. Asn87 is a glycosylation site (N-linked (GlcNAc...) asparagine).

The protein belongs to the major facilitator superfamily. Sugar transporter (TC 2.A.1.1) family.

It localises to the cell membrane. Functionally, probable glucose transporter. In Saccharomyces cerevisiae (strain ATCC 204508 / S288c) (Baker's yeast), this protein is Putative transporter-like protein YIL171W.